A 212-amino-acid chain; its full sequence is Peptide methionine sulfoxide reductase MsrA (212 aa).

C52 is a catalytic residue.

Belongs to the MsrA Met sulfoxide reductase family.

It carries out the reaction L-methionyl-[protein] + [thioredoxin]-disulfide + H2O = L-methionyl-(S)-S-oxide-[protein] + [thioredoxin]-dithiol. The catalysed reaction is [thioredoxin]-disulfide + L-methionine + H2O = L-methionine (S)-S-oxide + [thioredoxin]-dithiol. Has an important function as a repair enzyme for proteins that have been inactivated by oxidation. Catalyzes the reversible oxidation-reduction of methionine sulfoxide in proteins to methionine. This is Peptide methionine sulfoxide reductase MsrA from Salmonella paratyphi B (strain ATCC BAA-1250 / SPB7).